A 476-amino-acid chain; its full sequence is Aspartyl/glutamyl-tRNA(Asn/Gln) amidotransferase subunit B (476 aa).

It belongs to the GatB/GatE family. GatB subfamily. In terms of assembly, heterotrimer of A, B and C subunits.

It carries out the reaction L-glutamyl-tRNA(Gln) + L-glutamine + ATP + H2O = L-glutaminyl-tRNA(Gln) + L-glutamate + ADP + phosphate + H(+). The catalysed reaction is L-aspartyl-tRNA(Asn) + L-glutamine + ATP + H2O = L-asparaginyl-tRNA(Asn) + L-glutamate + ADP + phosphate + 2 H(+). Functionally, allows the formation of correctly charged Asn-tRNA(Asn) or Gln-tRNA(Gln) through the transamidation of misacylated Asp-tRNA(Asn) or Glu-tRNA(Gln) in organisms which lack either or both of asparaginyl-tRNA or glutaminyl-tRNA synthetases. The reaction takes place in the presence of glutamine and ATP through an activated phospho-Asp-tRNA(Asn) or phospho-Glu-tRNA(Gln). The polypeptide is Aspartyl/glutamyl-tRNA(Asn/Gln) amidotransferase subunit B (Bacillus pumilus (strain SAFR-032)).